Here is a 357-residue protein sequence, read N- to C-terminus: Phospho-N-acetylmuramoyl-pentapeptide-transferase (357 aa).

10 consecutive transmembrane segments (helical) span residues 23–43 (AIFS…YFIY), 70–90 (TMGG…YCNL), 91–111 (SNIY…IGFI), 127–147 (LKWK…MIKI), 171–191 (YLYI…VNLT), 196–216 (GLAI…SLFS), 236–256 (LAIL…FNSY), 260–280 (VFMG…IAIL), 286–306 (LLII…LQII), and 334–354 (LIIV…LISL).

The protein belongs to the glycosyltransferase 4 family. MraY subfamily. It depends on Mg(2+) as a cofactor.

The protein resides in the cell inner membrane. It catalyses the reaction UDP-N-acetyl-alpha-D-muramoyl-L-alanyl-gamma-D-glutamyl-meso-2,6-diaminopimeloyl-D-alanyl-D-alanine + di-trans,octa-cis-undecaprenyl phosphate = di-trans,octa-cis-undecaprenyl diphospho-N-acetyl-alpha-D-muramoyl-L-alanyl-D-glutamyl-meso-2,6-diaminopimeloyl-D-alanyl-D-alanine + UMP. Its pathway is cell wall biogenesis; peptidoglycan biosynthesis. Catalyzes the initial step of the lipid cycle reactions in the biosynthesis of the cell wall peptidoglycan: transfers peptidoglycan precursor phospho-MurNAc-pentapeptide from UDP-MurNAc-pentapeptide onto the lipid carrier undecaprenyl phosphate, yielding undecaprenyl-pyrophosphoryl-MurNAc-pentapeptide, known as lipid I. This is Phospho-N-acetylmuramoyl-pentapeptide-transferase from Buchnera aphidicola subsp. Acyrthosiphon pisum (strain 5A).